Consider the following 292-residue polypeptide: Hypersensitive-induced response protein 4 (292 aa).

Gly-2 carries N-myristoyl glycine lipidation.

As to quaternary structure, self-interacts and forms heteromers. Interacts with NB-LRR class of R proteins before R proteins (e.g. RPS2 or RPM1) are activated by the effectors.

The protein resides in the cell membrane. This is Hypersensitive-induced response protein 4 (HIR4) from Arabidopsis thaliana (Mouse-ear cress).